A 179-amino-acid chain; its full sequence is Large ribosomal subunit protein uL10 (179 aa).

It belongs to the universal ribosomal protein uL10 family. In terms of assembly, part of the ribosomal stalk of the 50S ribosomal subunit. The N-terminus interacts with L11 and the large rRNA to form the base of the stalk. The C-terminus forms an elongated spine to which L12 dimers bind in a sequential fashion forming a multimeric L10(L12)X complex.

Forms part of the ribosomal stalk, playing a central role in the interaction of the ribosome with GTP-bound translation factors. This chain is Large ribosomal subunit protein uL10, found in Mycolicibacterium vanbaalenii (strain DSM 7251 / JCM 13017 / BCRC 16820 / KCTC 9966 / NRRL B-24157 / PYR-1) (Mycobacterium vanbaalenii).